The sequence spans 261 residues: MTWKQNETEIRQRIKEGQYDGPTTGLMNGFTQANLVILPQNLAYDFLLFCQRNPKPCPLLEVIDTGKYEPKETAPGKDLRTDLPRYYIYRDGVKSAEVTDINKYWTQDLVSFLLGCSFTFESFFLQRGVPVRHIEEGVNVPMYRTNIKCKDAGVFHGNMVVSMRPIPENKLTEAIQITSRFPAVHGAPIHIGSPEKIGIKDLDSPDFGNRVNVESGEIPVFWACGVTPQAVIMNYRPEFVITHAPGHMFITDKKDMDYFQL.

The protein belongs to the D-glutamate cyclase family.

This chain is Putative hydro-lyase Nther_1142, found in Natranaerobius thermophilus (strain ATCC BAA-1301 / DSM 18059 / JW/NM-WN-LF).